Consider the following 155-residue polypeptide: Ribosome maturation factor RimP (155 aa).

The protein belongs to the RimP family.

Its subcellular location is the cytoplasm. Functionally, required for maturation of 30S ribosomal subunits. The polypeptide is Ribosome maturation factor RimP (Staphylococcus aureus (strain bovine RF122 / ET3-1)).